The primary structure comprises 170 residues: MPFMHGSMPLRRTFFYLQQGKVKLRDNVNVFSMGFHKNPTPEQSGARDFVYWNWAQLQYHNPKVQLVKHADKVVTPFARAYLNDGREVLFDLDGMKREEIEKLLAKTLGKTELVERREHLESIAKLNPADFGSKNERQCMCEVQGQHPCTGLLRAPQCVTGKYRWNHNLI.

This sequence belongs to the mitochondrion-specific ribosomal protein mS25 family. As to quaternary structure, component of the mitochondrial ribosome small subunit (28S) which comprises a 12S rRNA and about 30 distinct proteins.

The protein localises to the mitochondrion. This Caenorhabditis elegans protein is Small ribosomal subunit protein mS25 (mrps-25).